The sequence spans 310 residues: Methionyl-tRNA formyltransferase (310 aa).

Residue 111 to 114 (SLLP) participates in (6S)-5,6,7,8-tetrahydrofolate binding.

This sequence belongs to the Fmt family.

It carries out the reaction L-methionyl-tRNA(fMet) + (6R)-10-formyltetrahydrofolate = N-formyl-L-methionyl-tRNA(fMet) + (6S)-5,6,7,8-tetrahydrofolate + H(+). In terms of biological role, attaches a formyl group to the free amino group of methionyl-tRNA(fMet). The formyl group appears to play a dual role in the initiator identity of N-formylmethionyl-tRNA by promoting its recognition by IF2 and preventing the misappropriation of this tRNA by the elongation apparatus. The sequence is that of Methionyl-tRNA formyltransferase from Rhodopseudomonas palustris (strain TIE-1).